A 79-amino-acid polypeptide reads, in one-letter code: Cyclin-dependent kinases regulatory subunit 1 (79 aa).

The residue at position 2 (Ser-2) is an N-acetylserine.

This sequence belongs to the CKS family. Forms a homohexamer that can probably bind six kinase subunits.

In terms of biological role, binds to the catalytic subunit of the cyclin dependent kinases and is essential for their biological function. In Bos taurus (Bovine), this protein is Cyclin-dependent kinases regulatory subunit 1 (CKS1B).